A 471-amino-acid polypeptide reads, in one-letter code: Uronate isomerase (471 aa).

It belongs to the metallo-dependent hydrolases superfamily. Uronate isomerase family.

The enzyme catalyses D-glucuronate = D-fructuronate. The catalysed reaction is aldehydo-D-galacturonate = keto-D-tagaturonate. It participates in carbohydrate metabolism; pentose and glucuronate interconversion. The sequence is that of Uronate isomerase from Latilactobacillus sakei subsp. sakei (strain 23K) (Lactobacillus sakei subsp. sakei).